A 551-amino-acid chain; its full sequence is Pentatricopeptide repeat-containing protein At3g13150 (551 aa).

The tract at residues 22–67 is disordered; that stretch reads ATAKSAKPRSQTKSTKFPSKLKASTASVGDGGQSSNDAKDSKNSKL. A compositionally biased stretch (polar residues) spans 29-48; it reads PRSQTKSTKFPSKLKASTAS. A compositionally biased stretch (basic and acidic residues) spans 58-67; it reads DAKDSKNSKL. 7 PPR repeats span residues 121–155, 156–191, 192–226, 227–261, 262–296, 297–331, and 332–366; these read SEDF…NCER, TVKS…GITP, DLVT…GFEP, DLIS…NLSP, NIRS…GISP, DVHT…GLTP, and DTVT…KLLS. 2 disordered regions span residues 409 to 435 and 449 to 551; these read GKKK…SPDT and SSSD…LLDD. Residues 415 to 435 are compositionally biased toward low complexity; sequence SSPVSSSAKTTSTPVSSSPDT.

Belongs to the PPR family. P subfamily.

The chain is Pentatricopeptide repeat-containing protein At3g13150 from Arabidopsis thaliana (Mouse-ear cress).